A 356-amino-acid chain; its full sequence is Phenylalanine--tRNA ligase alpha subunit (356 aa).

Residue Glu260 coordinates Mg(2+).

This sequence belongs to the class-II aminoacyl-tRNA synthetase family. Phe-tRNA synthetase alpha subunit type 1 subfamily. In terms of assembly, tetramer of two alpha and two beta subunits. Requires Mg(2+) as cofactor.

Its subcellular location is the cytoplasm. The catalysed reaction is tRNA(Phe) + L-phenylalanine + ATP = L-phenylalanyl-tRNA(Phe) + AMP + diphosphate + H(+). The protein is Phenylalanine--tRNA ligase alpha subunit of Gluconacetobacter diazotrophicus (strain ATCC 49037 / DSM 5601 / CCUG 37298 / CIP 103539 / LMG 7603 / PAl5).